The sequence spans 893 residues: Alpha-actinin-1 (893 aa).

The interval 1–248 (MDHHYDPQQT…IMTYVSSFYH (248 aa)) is actin-binding. Residue Tyr13 is modified to Phosphotyrosine; by FAK1. Calponin-homology (CH) domains are found at residues 32–136 (KQQR…LRFA) and 145–251 (TSAK…HAFS). 4 Spectrin repeats span residues 275–385 (QLME…WLLN), 395–500 (HLAE…ALER), 510–621 (QLYL…ALME), and 631–734 (RLRK…EVEN). 2 EF-hand domains span residues 747-782 (EQMN…LGYD) and 788-823 (QGEA…ETAD). Ca(2+)-binding residues include Asp760, Asp762, Ser764, Thr766, and Glu771.

This sequence belongs to the alpha-actinin family. As to quaternary structure, homodimer; antiparallel. Interacts with PDLIM4 (via PDZ domain).

It is found in the cytoplasm. The protein localises to the cytoskeleton. Its subcellular location is the myofibril. It localises to the sarcomere. The protein resides in the z line. It is found in the cell membrane. The protein localises to the cell junction. Its subcellular location is the cell projection. It localises to the ruffle. Its function is as follows. F-actin cross-linking protein is thought to anchor actin to a variety of intracellular structures. This is a bundling protein. In Gallus gallus (Chicken), this protein is Alpha-actinin-1 (ACTN1).